An 894-amino-acid polypeptide reads, in one-letter code: Peroxisomal hydratase-dehydrogenase-epimerase (894 aa).

Short-chain dehydrogenase like regions lie at residues 6–230 (RFDG…HKNN) and 311–523 (DFKG…CSDK). NADP(+) is bound by residues Val14, Lys53, Asn99, Arg132, Tyr164, Lys168, and Ala197. The active-site Proton acceptor is Tyr164. Catalysis depends on Lys168, which acts as the Lowers pKa of active site Tyr. The active-site Proton acceptor is the Tyr458. (3R)-3-hydroxydecanoyl-CoA-binding residues include His693, Gly694, and Lys723. The interval 763–782 (KKPADRGASTAANKPPARSP) is disordered. One can recognise a MaoC-like domain in the interval 776–887 (KPPARSPDAV…VKETGKLAIS (112 aa)). (3R)-3-hydroxydecanoyl-CoA is bound by residues Asp803, Asn805, Gly826, Phe851, and Gly853.

This sequence belongs to the short-chain dehydrogenases/reductases (SDR) family. In terms of assembly, monomer.

Its subcellular location is the peroxisome. It catalyses the reaction a (3R)-3-hydroxyacyl-CoA = a (2E)-enoyl-CoA + H2O. The enzyme catalyses a (3R)-3-hydroxyacyl-CoA + NAD(+) = a 3-oxoacyl-CoA + NADH + H(+). It participates in lipid metabolism; fatty acid beta-oxidation. Its function is as follows. Second trifunctional enzyme acting on the beta-oxidation pathway for fatty acids, possessing hydratase-dehydrogenase-epimerase activities. Converts trans-2-enoyl-CoA via D-3-hydroxyacyl-CoA to 3-ketoacyl-CoA. This chain is Peroxisomal hydratase-dehydrogenase-epimerase (fox-2), found in Neurospora crassa (strain ATCC 24698 / 74-OR23-1A / CBS 708.71 / DSM 1257 / FGSC 987).